The following is a 341-amino-acid chain: Putative [LysW]-lysine/[LysW]-ornithine hydrolase (341 aa).

His-62 is a Zn(2+) binding site. The active site involves Asp-64. Residue Asp-86 coordinates Zn(2+). Glu-115 serves as the catalytic Proton acceptor. Positions 116, 140, and 309 each coordinate Zn(2+).

Belongs to the peptidase M20A family. LysK subfamily. Zn(2+) serves as cofactor. It depends on Co(2+) as a cofactor.

It localises to the cytoplasm. The enzyme catalyses [amino-group carrier protein]-C-terminal-gamma-(L-lysyl)-L-glutamate + H2O = [amino-group carrier protein]-C-terminal-L-glutamate + L-lysine. It carries out the reaction [amino-group carrier protein]-C-terminal-gamma-(L-ornithyl)-L-glutamate + H2O = [amino-group carrier protein]-C-terminal-L-glutamate + L-ornithine. It participates in amino-acid biosynthesis; L-lysine biosynthesis via AAA pathway; L-lysine from L-alpha-aminoadipate (Thermus route): step 5/5. Its pathway is amino-acid biosynthesis; L-arginine biosynthesis. Catalyzes the release of L-lysine from [LysW]-gamma-L-lysine and the release of L-ornithine from [LysW]-L-ornithine. This is Putative [LysW]-lysine/[LysW]-ornithine hydrolase from Pyrobaculum aerophilum (strain ATCC 51768 / DSM 7523 / JCM 9630 / CIP 104966 / NBRC 100827 / IM2).